The sequence spans 181 residues: Adenylyl-sulfate kinase (181 aa).

Gly-13 to Ser-20 contributes to the ATP binding site. Ser-87 serves as the catalytic Phosphoserine intermediate.

It belongs to the APS kinase family.

It catalyses the reaction adenosine 5'-phosphosulfate + ATP = 3'-phosphoadenylyl sulfate + ADP + H(+). The protein operates within sulfur metabolism; hydrogen sulfide biosynthesis; sulfite from sulfate: step 2/3. Catalyzes the synthesis of activated sulfate. The protein is Adenylyl-sulfate kinase of Burkholderia ambifaria (strain ATCC BAA-244 / DSM 16087 / CCUG 44356 / LMG 19182 / AMMD) (Burkholderia cepacia (strain AMMD)).